The chain runs to 425 residues: MTMAKLTESMTNVLEGDSMDQDVESPVAIHQPKLPKQARDDLPRHISRDRTKRKIQRYVRKDGKCNVHHGNVRETYRYLTDIFTTLVDLKWRFNLLIFVMVYTVTWLFFGMIWWLIAYIRGDMDHIEDPSWTPCVTNLNGFVSAFLFSIETETTIGYGYRVITDKCPEGIILLLIQSVLGSIVNAFMVGCMFVKISQPKKRAETLVFSTHAVISMRDGKLCLMFRVGDLRNSHIVEASIRAKLIKSKQTSEGEFIPLNQTDINVGYYTGDDRLFLVSPLIISHEINQQSPFWEISKAQLPKEELEIVVILEGMVEATGMTCQARSSYVTSEILWGYRFTPVLTLEDGFYEVDYNSFHETHETSTPSLSAKELAELANRAELPLSWSVSSKLNQHAELETEEEEKNPEELTERNGDVANLENESKV.

The Cytoplasmic portion of the chain corresponds to 1 to 91 (MTMAKLTESM…IFTTLVDLKW (91 aa)). Serine 18 and serine 25 each carry phosphoserine. The chain crosses the membrane as a helical span at residues 92–116 (RFNLLIFVMVYTVTWLFFGMIWWLI). The Extracellular segment spans residues 117–140 (AYIRGDMDHIEDPSWTPCVTNLNG). The helical; Pore-forming intramembrane region spans 141–152 (FVSAFLFSIETE). The segment at residues 153-159 (TTIGYGY) is an intramembrane region (pore-forming). The Selectivity filter motif lies at 154 to 159 (TIGYGY). Over 160–168 (RVITDKCPE) the chain is Extracellular. A helical membrane pass occupies residues 169-190 (GIILLLIQSVLGSIVNAFMVGC). The Cytoplasmic portion of the chain corresponds to 191–425 (MFVKISQPKK…VANLENESKV (235 aa)). The tract at residues 392-425 (NQHAELETEEEEKNPEELTERNGDVANLENESKV) is disordered. Residues 422–425 (ESKV) carry the PDZ-binding motif.

It belongs to the inward rectifier-type potassium channel (TC 1.A.2.1) family. KCNJ6 subfamily. As to quaternary structure, associates with KCNJ3/GIRK1 or KCNJ5/GRIK4 to form a G-protein-activated heteromultimer pore-forming unit. The resulting inward current is much larger. Interacts (via PDZ-binding motif) with SNX27 (via PDZ domain); the interaction is required for recycling to the plasma membrane when endocytosed and prevent degradation in lysosomes. As to expression, pancreatic beta cells and brain.

It localises to the membrane. The enzyme catalyses K(+)(in) = K(+)(out). Activated by phosphatidylinositol 4,5 biphosphate (PtdIns(4,5)P2). Its function is as follows. Inward rectifier potassium channels are characterized by a greater tendency to allow potassium to flow into the cell rather than out of it. Their voltage dependence is regulated by the concentration of extracellular potassium; as external potassium is raised, the voltage range of the channel opening shifts to more positive voltages. The inward rectification is mainly due to the blockage of outward current by internal magnesium. This potassium channel may be involved in the regulation of insulin secretion by glucose and/or neurotransmitters acting through G-protein-coupled receptors. In Rattus norvegicus (Rat), this protein is G protein-activated inward rectifier potassium channel 2 (Kcnj6).